Consider the following 134-residue polypeptide: MTISLGFVIAEFNRDLTYQMELLGREHAEFLGATVKETILVPGVFDMPLAIKKLCQREDIDAVVTIGSVIEGETDHDQVVMQHAARKIMDLSLEFNKPVTLGIPGPGMTRMAAHERVDYAKRAVEAAVKLVRRL.

5-amino-6-(D-ribitylamino)uracil contacts are provided by residues F12, 44–46, and 68–70; these read VFD and SVI. 73–74 is a binding site for (2S)-2-hydroxy-3-oxobutyl phosphate; it reads ET. H76 (proton donor) is an active-site residue. 5-amino-6-(D-ribitylamino)uracil is bound at residue L101. Position 116 (R116) interacts with (2S)-2-hydroxy-3-oxobutyl phosphate.

Belongs to the DMRL synthase family.

The catalysed reaction is (2S)-2-hydroxy-3-oxobutyl phosphate + 5-amino-6-(D-ribitylamino)uracil = 6,7-dimethyl-8-(1-D-ribityl)lumazine + phosphate + 2 H2O + H(+). Its pathway is cofactor biosynthesis; riboflavin biosynthesis; riboflavin from 2-hydroxy-3-oxobutyl phosphate and 5-amino-6-(D-ribitylamino)uracil: step 1/2. Functionally, catalyzes the formation of 6,7-dimethyl-8-ribityllumazine by condensation of 5-amino-6-(D-ribitylamino)uracil with 3,4-dihydroxy-2-butanone 4-phosphate. This is the penultimate step in the biosynthesis of riboflavin. This Methanosarcina acetivorans (strain ATCC 35395 / DSM 2834 / JCM 12185 / C2A) protein is 6,7-dimethyl-8-ribityllumazine synthase.